The following is a 156-amino-acid chain: Small ribosomal subunit protein uS11 (156 aa).

The tract at residues 1-27 (MSEKEQKEVEAKESSGKAEERRETREK) is disordered.

This sequence belongs to the universal ribosomal protein uS11 family. Part of the 30S ribosomal subunit.

Functionally, located on the platform of the 30S subunit. The chain is Small ribosomal subunit protein uS11 from Thermofilum pendens (strain DSM 2475 / Hrk 5).